The primary structure comprises 159 residues: ATP synthase subunit b 2 (159 aa).

A helical transmembrane segment spans residues 1 to 21 (MDATFWAFIALVIFVAIVVYM).

This sequence belongs to the ATPase B chain family. In terms of assembly, F-type ATPases have 2 components, F(1) - the catalytic core - and F(0) - the membrane proton channel. F(1) has five subunits: alpha(3), beta(3), gamma(1), delta(1), epsilon(1). F(0) has three main subunits: a(1), b(2) and c(10-14). The alpha and beta chains form an alternating ring which encloses part of the gamma chain. F(1) is attached to F(0) by a central stalk formed by the gamma and epsilon chains, while a peripheral stalk is formed by the delta and b chains.

The protein localises to the cell inner membrane. F(1)F(0) ATP synthase produces ATP from ADP in the presence of a proton or sodium gradient. F-type ATPases consist of two structural domains, F(1) containing the extramembraneous catalytic core and F(0) containing the membrane proton channel, linked together by a central stalk and a peripheral stalk. During catalysis, ATP synthesis in the catalytic domain of F(1) is coupled via a rotary mechanism of the central stalk subunits to proton translocation. In terms of biological role, component of the F(0) channel, it forms part of the peripheral stalk, linking F(1) to F(0). The polypeptide is ATP synthase subunit b 2 (Brucella ovis (strain ATCC 25840 / 63/290 / NCTC 10512)).